A 2618-amino-acid polypeptide reads, in one-letter code: Mediator of RNA polymerase II transcription subunit 13 (2618 aa).

Composition is skewed to low complexity over residues 232–255, 509–519, and 532–543; these read FAAA…VPNP, TPASGTGSLSA, and DSKQLVQQQIQQ. Disordered stretches follow at residues 232 to 279, 509 to 543, 569 to 731, 916 to 957, 970 to 995, 1036 to 1055, 1268 to 1384, 1521 to 1557, 1614 to 1633, and 1985 to 2060; these read FAAA…AAPP, TPAS…QIQQ, GNTP…SGGP, LNIK…AEGL, TSSN…NGGC, TKMF…SSPC, PRTP…TGVV, ASAS…ITGY, SRKN…LDKI, and KTLL…GETK. Phosphothreonine occurs at positions 571 and 575. Polar residues-rich tracts occupy residues 581–590, 634–643, and 669–681; these read STYSRNSLGG, APTSVSNLQQ, and SITA…QTPS. A compositionally biased stretch (gly residues) spans 692–706; the sequence is AGGGPAGGQGLGTGP. Residues 711–723 show a composition bias toward low complexity; that stretch reads AQQPATPTAATSA. Residues 939 to 949 show a composition bias toward gly residues; it reads NSSGGGSGSGG. Over residues 1272-1295 the composition is skewed to polar residues; the sequence is LTPSTVPQPLSSGGSQYLLNQLNC. Composition is skewed to gly residues over residues 1375-1384 and 1528-1538; these read GLGGGATGVV and AGSGHGHGPNG. The span at 1539–1553 shows a compositional bias: low complexity; sequence GSNSSSCTPPSSNPH. The segment covering 1614-1629 has biased composition (polar residues); that stretch reads SRKNQNKQGPGETSSA. Residues 1993 to 2014 are compositionally biased toward low complexity; sequence GSGNSHSKGGSSCSSNSSSVSG. Residues S2472 and S2475 each carry the phosphoserine modification.

Belongs to the Mediator complex subunit 13 family. In terms of assembly, component of the Cdk8 module of the Mediator complex, composed of CycC, Cdk8, kto and skd.

It is found in the nucleus. Component of the Mediator complex, a coactivator involved in the regulated transcription of nearly all RNA polymerase II-dependent genes. Mediator functions as a bridge to convey information from gene-specific regulatory proteins to the basal RNA polymerase II transcription machinery. Mediator is recruited to promoters by direct interactions with regulatory proteins and serves as a scaffold for the assembly of a functional preinitiation complex with RNA polymerase II and the general transcription factors. Required for leg and eye development and macrochaete specification or differentiation. Negatively regulates sex comb development. Required for activated transcription of the MtnB and MtnD genes. In Drosophila melanogaster (Fruit fly), this protein is Mediator of RNA polymerase II transcription subunit 13 (skd).